A 1094-amino-acid chain; its full sequence is MNVNQSVPPVPPFGQPQPIYPGYHQSSYGGQSGSTAPAIPYGAYNGPVPGYQQTPPQGMSRAPPSSGAPPASTAQAPCGQAAYGQFGQGDVQNGPSSTVQMQRLPGSQPFGSPLAPVGNQPPVLQPYGPPPTSAQVATQLSGMQISGAVAPAPPSSGLGFGPPTSLASASGSFPNSGLYGSYPQGQAPPLSQAQGHPGIQTPQRSAPSQASSFTPPASGGPRLPSMTGPLLPGQSFGGPSVSQPNHVSSPPQALPPGTQMTGPLGPLPPMHSPQQPGYQPQQNGSFGPARGPQSNYGGPYPAAPTFGSQPGPPQPLPPKRLDPDAIPSPIQVIEDDRNNRGTEPFVTGVRGQVPPLVTTNFLVKDQGNASPRYIRCTSYNIPCTSDMAKQAQVPLAAVIKPLARLPPEEASPYVVDHGESGPLRCNRCKAYMCPFMQFIEGGRRFQCCFCSCINDVPPQYFQHLDHTGKRVDAYDRPELSLGSYEFLATVDYCKNNKFPSPPAFIFMIDVSYNAIRTGLVRLLCEELKSLLDFLPREGGAEESAIRVGFVTYNKVLHFYNVKSSLAQPQMMVVSDVADMFVPLLDGFLVNVNESRAVITSLLDQIPEMFADTRETETVFVPVIQAGMEALKAAECAGKLFLFHTSLPIAEAPGKLKNRDDRKLINTDKEKTLFQPQTGAYQTLAKECVAQGCCVDLFLFPNQYVDVATLSVVPQLTGGSVYKYASFQVENDQERFLSDLRRDVQKVVGFDAVMRVRTSTGIRAVDFFGAFYMSNTTDVELAGLDGDKTVTVEFKHDDRLNEESGALLQCALLYTSCAGQRRLRIHNLALNCCTQLADLYRNCETDTLINYMAKFAYRGVLNSPVKAVRDTLITQCAQILACYRKNCASPSSAGQLILPECMKLLPVYLNCVLKSDVLQPGAEVTTDDRAYVRQLVTSMDVTETNVFFYPRLLPLTKSPVESTTEPPAVRASEERLSNGDIYLLENGLNLFLWVGASVQQGVVQSLFSVSSFSQITSGLSVLPVLDNPLSKKVRGLIDSLRAQRSRYMKLTVVKQEDKMEMLFKHFLVEDKSLSGGASYVDFLCHMHKEIRQLLS.

The interval 1–338 is disordered; the sequence is MNVNQSVPPV…PIQVIEDDRN (338 aa). A compositionally biased stretch (pro residues) spans 8–19; it reads PPVPPFGQPQPI. 2 stretches are compositionally biased toward low complexity: residues 20–29 and 60–77; these read YPGYHQSSYG and SRAP…AQAP. Residues 90–101 show a composition bias toward polar residues; it reads DVQNGPSSTVQM. A compositionally biased stretch (pro residues) spans 123-132; that stretch reads VLQPYGPPPT. Composition is skewed to polar residues over residues 133–144, 165–175, 189–215, and 240–251; these read SAQVATQLSGMQ, SLASASGSFPN, PLSQ…SFTP, and SVSQPNHVSSPP. Thr214 bears the Phosphothreonine mark. A compositionally biased stretch (low complexity) spans 273-282; the sequence is PQQPGYQPQQ. Residues Cys425, Cys428, Cys447, and Cys450 each coordinate Zn(2+). Positions 425 to 450 are zinc finger-like; it reads CNRCKAYMCPFMQFIEGGRRFQCCFC. Residues 962 to 1034 form a Gelsolin-like repeat; that stretch reads TTEPPAVRAS…DNPLSKKVRG (73 aa).

This sequence belongs to the SEC23/SEC24 family. SEC24 subfamily. As to quaternary structure, COPII is composed of at least five proteins: the Sec23/24 complex, the Sec13/31 complex and Sar1. Interacts with TMED2 and TMED10. Interacts with GOSR2 (via IxM motif) and STX5 (via IxM motif); recruits GOSR2 and STX5 into COPII-coated vesicles. Interacts with DDHD1. Interacts with STING1; promoting STING1 translocation to the COPII vesicles. Ubiquitous.

It is found in the cytoplasmic vesicle. It localises to the COPII-coated vesicle membrane. The protein resides in the endoplasmic reticulum membrane. The protein localises to the cytoplasm. Its subcellular location is the cytosol. Component of the coat protein complex II (COPII) which promotes the formation of transport vesicles from the endoplasmic reticulum (ER). The coat has two main functions, the physical deformation of the endoplasmic reticulum membrane into vesicles and the selection of cargo molecules for their transport to the Golgi complex. Plays a central role in cargo selection within the COPII complex and together with SEC24D may have a different specificity compared to SEC24A and SEC24B. May more specifically package GPI-anchored proteins through the cargo receptor TMED10. May also be specific for IxM motif-containing cargos like the SNAREs GOSR2 and STX5. This Homo sapiens (Human) protein is Protein transport protein Sec24C.